A 1399-amino-acid chain; its full sequence is DNA-directed RNA polymerase subunit beta' (1399 aa).

Zn(2+) is bound by residues cysteine 70, cysteine 72, cysteine 85, and cysteine 88. Aspartate 460, aspartate 462, and aspartate 464 together coordinate Mg(2+). Cysteine 814, cysteine 888, cysteine 895, and cysteine 898 together coordinate Zn(2+).

Belongs to the RNA polymerase beta' chain family. As to quaternary structure, the RNAP catalytic core consists of 2 alpha, 1 beta, 1 beta' and 1 omega subunit. When a sigma factor is associated with the core the holoenzyme is formed, which can initiate transcription. Mg(2+) is required as a cofactor. It depends on Zn(2+) as a cofactor.

The enzyme catalyses RNA(n) + a ribonucleoside 5'-triphosphate = RNA(n+1) + diphosphate. Its function is as follows. DNA-dependent RNA polymerase catalyzes the transcription of DNA into RNA using the four ribonucleoside triphosphates as substrates. The protein is DNA-directed RNA polymerase subunit beta' of Pseudomonas savastanoi pv. phaseolicola (strain 1448A / Race 6) (Pseudomonas syringae pv. phaseolicola (strain 1448A / Race 6)).